A 761-amino-acid polypeptide reads, in one-letter code: Semaphorin-4A (761 aa).

A signal peptide spans 1-32; sequence MALPALGLDPWSLLGLFLFQLLQLLLPTTTAG. Over 33 to 683 the chain is Extracellular; sequence GGGQGPMPRV…LAAQQSYWPH (651 aa). Positions 36–494 constitute a Sema domain; it reads QGPMPRVRYY…FSGGVWRVPR (459 aa). Cysteine 113 and cysteine 124 are disulfide-bonded. N-linked (GlcNAc...) asparagine glycosylation is found at asparagine 120 and asparagine 135. Cystine bridges form between cysteine 142–cysteine 151, cysteine 269–cysteine 379, and cysteine 293–cysteine 339. N-linked (GlcNAc...) asparagine glycosylation is present at asparagine 496. A PSI domain is found at 496–548; the sequence is NCSVYESCVDCVLARDPHCAWDPESRTCCLLSAPNLNSWKQDMERGNPEWACA. 3 disulfides stabilise this stretch: cysteine 497/cysteine 514, cysteine 506/cysteine 523, and cysteine 580/cysteine 624. The 59-residue stretch at 573 to 631 folds into the Ig-like C2-type domain; that stretch reads NSILELPCPHLSALASYYWSHGPAAVPEASSTVYNGSLLLIVQDGVGGLYQCWATENGF. Asparagine 607 carries an N-linked (GlcNAc...) asparagine glycan. A helical transmembrane segment spans residues 684–704; it reads FVTVTVLFALVLSGALIILVA. Over 705-761 the chain is Cytoplasmic; that stretch reads SPLRALRARGKVQGCETLRPGEKAPLSREQHLQSPKECRTSASDVDADNNCLGTEVA. Residues 722-749 form a disordered region; the sequence is LRPGEKAPLSREQHLQSPKECRTSASDV. A compositionally biased stretch (basic and acidic residues) spans 723–743; sequence RPGEKAPLSREQHLQSPKECR.

The protein belongs to the semaphorin family. In terms of assembly, interacts with PLXNB1, PLXNB2, PLXNB3, PLXND1 and TIMD2.

It localises to the cell membrane. Cell surface receptor for PLXNB1, PLXNB2, PLXNB3 and PLXND1 that plays an important role in cell-cell signaling. Regulates glutamatergic and GABAergic synapse development. Promotes the development of inhibitory synapses in a PLXNB1-dependent manner and promotes the development of excitatory synapses in a PLXNB2-dependent manner. Plays a role in priming antigen-specific T-cells, promotes differentiation of Th1 T-helper cells, and thereby contributes to adaptive immunity. Promotes phosphorylation of TIMD2. Inhibits angiogenesis. Promotes axon growth cone collapse. Inhibits axonal extension by providing local signals to specify territories inaccessible for growing axons. The sequence is that of Semaphorin-4A (SEMA4A) from Homo sapiens (Human).